Here is a 1437-residue protein sequence, read N- to C-terminus: uncharacterized protein (1437 aa).

A signal peptide spans Met1–Asn25. Topologically, residues Gln26–Trp1326 are extracellular. Residues Asn103, Asn315, Asn364, Asn492, Asn605, Asn676, and Asn914 are each glycosylated (N-linked (GlcNAc...) asparagine). The NIDO domain occupies Ala193 to Val356. The region spanning Val648–Arg829 is the AMOP domain. Residues Leu1327–Phe1347 traverse the membrane as a helical segment. The Cytoplasmic portion of the chain corresponds to Trp1348–Val1437. The tract at residues Pro1394–Pro1419 is disordered.

It is found in the membrane. This is an uncharacterized protein from Caenorhabditis elegans.